Here is a 438-residue protein sequence, read N- to C-terminus: Adenosylhomocysteinase (438 aa).

3 residues coordinate substrate: threonine 64, aspartate 139, and glutamate 164. Residue 165 to 167 (TTT) coordinates NAD(+). The substrate site is built by lysine 194 and aspartate 198. NAD(+) is bound by residues asparagine 199, 228 to 233 (GYGDVG), glutamate 251, asparagine 286, 307 to 309 (IGH), and asparagine 352.

It belongs to the adenosylhomocysteinase family. NAD(+) serves as cofactor.

Its subcellular location is the cytoplasm. It carries out the reaction S-adenosyl-L-homocysteine + H2O = L-homocysteine + adenosine. It functions in the pathway amino-acid biosynthesis; L-homocysteine biosynthesis; L-homocysteine from S-adenosyl-L-homocysteine: step 1/1. Functionally, may play a key role in the regulation of the intracellular concentration of adenosylhomocysteine. The chain is Adenosylhomocysteinase from Coxiella burnetii (strain CbuK_Q154) (Coxiella burnetii (strain Q154)).